Here is a 77-residue protein sequence, read N- to C-terminus: MQKRLHYSSLEINRRAEELIQHSANRYRITVQIANRAKQRRGLEASEDLDDLPLKPVIRAIIEMSDEVAQPELLADS.

The protein belongs to the RNA polymerase subunit omega family. As to quaternary structure, in cyanobacteria the RNAP catalytic core is composed of 2 alpha, 1 beta, 1 beta', 1 gamma and 1 omega subunit. When a sigma factor is associated with the core the holoenzyme is formed, which can initiate transcription.

The enzyme catalyses RNA(n) + a ribonucleoside 5'-triphosphate = RNA(n+1) + diphosphate. Its function is as follows. Promotes RNA polymerase assembly. Latches the N- and C-terminal regions of the beta' subunit thereby facilitating its interaction with the beta and alpha subunits. In Thermosynechococcus vestitus (strain NIES-2133 / IAM M-273 / BP-1), this protein is DNA-directed RNA polymerase subunit omega.